The following is a 212-amino-acid chain: Small ribosomal subunit protein uS5 (212 aa).

In terms of domain architecture, S5 DRBM spans 48-111 (LDDEVLDINM…EVAKLNIIDV (64 aa)).

This sequence belongs to the universal ribosomal protein uS5 family. Part of the 30S ribosomal subunit. Contacts protein S4.

Functionally, with S4 and S12 plays an important role in translational accuracy. This Halobacterium salinarum (strain ATCC 700922 / JCM 11081 / NRC-1) (Halobacterium halobium) protein is Small ribosomal subunit protein uS5.